Here is a 520-residue protein sequence, read N- to C-terminus: GMP synthase [glutamine-hydrolyzing] (520 aa).

The 194-residue stretch at 12 to 205 (KIIVLDYGSQ…AISICGARGD (194 aa)) folds into the Glutamine amidotransferase type-1 domain. The Nucleophile role is filled by C89. Residues H179 and E181 contribute to the active site. The 190-residue stretch at 206 to 395 (WSMDNFIDME…LGMPEEIVWR (190 aa)) folds into the GMPS ATP-PPase domain. Position 233 to 239 (233 to 239 (SGGVDSS)) interacts with ATP.

As to quaternary structure, homodimer.

It carries out the reaction XMP + L-glutamine + ATP + H2O = GMP + L-glutamate + AMP + diphosphate + 2 H(+). Its pathway is purine metabolism; GMP biosynthesis; GMP from XMP (L-Gln route): step 1/1. In terms of biological role, catalyzes the synthesis of GMP from XMP. The protein is GMP synthase [glutamine-hydrolyzing] of Streptococcus pyogenes serotype M3 (strain SSI-1).